Reading from the N-terminus, the 495-residue chain is IQ domain-containing protein IQM5 (495 aa).

Residues 89-122 (ENRGGEEEDERGSSPKRRNRGNLTALSLPAPTPF) form a disordered region. One can recognise an IQ domain in the interval 131-160 (LDAAAVTLQKVYKSYRTRRNLADCAVVVEE).

Expressed in roots, rosette and cauline leaves, and at lower levels in stems, flowers and siliques.

It is found in the cytoplasm. The protein resides in the nucleus. Its function is as follows. May be involved in biotic and abiotic stress responses. This is IQ domain-containing protein IQM5 from Arabidopsis thaliana (Mouse-ear cress).